Consider the following 250-residue polypeptide: Flap endonuclease Xni (250 aa).

Asp-104 contacts Mg(2+). Residues 160–249 (VQPQQLTDFW…LQGNLQQLRL (90 aa)) form the 5'-3' exonuclease domain. The K(+) site is built by Leu-171, Ala-172, Pro-180, Val-182, and Ile-185. Residues 184–189 (GIGPKS) are interaction with DNA.

The protein belongs to the Xni family. Mg(2+) serves as cofactor. The cofactor is K(+).

Its function is as follows. Has flap endonuclease activity. During DNA replication, flap endonucleases cleave the 5'-overhanging flap structure that is generated by displacement synthesis when DNA polymerase encounters the 5'-end of a downstream Okazaki fragment. The protein is Flap endonuclease Xni of Sodalis glossinidius (strain morsitans).